The primary structure comprises 263 residues: Hydroxyethylthiazole kinase (263 aa).

A substrate-binding site is contributed by M41. ATP contacts are provided by R117 and S163. A190 is a substrate binding site.

The protein belongs to the Thz kinase family. Mg(2+) is required as a cofactor.

It catalyses the reaction 5-(2-hydroxyethyl)-4-methylthiazole + ATP = 4-methyl-5-(2-phosphooxyethyl)-thiazole + ADP + H(+). The protein operates within cofactor biosynthesis; thiamine diphosphate biosynthesis; 4-methyl-5-(2-phosphoethyl)-thiazole from 5-(2-hydroxyethyl)-4-methylthiazole: step 1/1. Its function is as follows. Catalyzes the phosphorylation of the hydroxyl group of 4-methyl-5-beta-hydroxyethylthiazole (THZ). The sequence is that of Hydroxyethylthiazole kinase from Haemophilus influenzae (strain PittEE).